The sequence spans 739 residues: tRNA 5-methylaminomethyl-2-thiouridine biosynthesis bifunctional protein MnmC (739 aa).

Residues methionine 1–leucine 282 are tRNA (mnm(5)s(2)U34)-methyltransferase. Residues isoleucine 330–serine 739 are FAD-dependent cmnm(5)s(2)U34 oxidoreductase.

In the N-terminal section; belongs to the methyltransferase superfamily. tRNA (mnm(5)s(2)U34)-methyltransferase family. This sequence in the C-terminal section; belongs to the DAO family. FAD is required as a cofactor.

Its subcellular location is the cytoplasm. It carries out the reaction 5-aminomethyl-2-thiouridine(34) in tRNA + S-adenosyl-L-methionine = 5-methylaminomethyl-2-thiouridine(34) in tRNA + S-adenosyl-L-homocysteine + H(+). Functionally, catalyzes the last two steps in the biosynthesis of 5-methylaminomethyl-2-thiouridine (mnm(5)s(2)U) at the wobble position (U34) in tRNA. Catalyzes the FAD-dependent demodification of cmnm(5)s(2)U34 to nm(5)s(2)U34, followed by the transfer of a methyl group from S-adenosyl-L-methionine to nm(5)s(2)U34, to form mnm(5)s(2)U34. This is tRNA 5-methylaminomethyl-2-thiouridine biosynthesis bifunctional protein MnmC from Psychrobacter sp. (strain PRwf-1).